The primary structure comprises 88 residues: Probable Fe(2+)-trafficking protein (88 aa).

This sequence belongs to the Fe(2+)-trafficking protein family.

Its function is as follows. Could be a mediator in iron transactions between iron acquisition and iron-requiring processes, such as synthesis and/or repair of Fe-S clusters in biosynthetic enzymes. This is Probable Fe(2+)-trafficking protein from Teredinibacter turnerae (strain ATCC 39867 / T7901).